The chain runs to 3603 residues: Plipastatin synthase subunit D (3603 aa).

Residues 7-306 are condensation 1; that stretch reads IQDIYPLSYM…NTMPVRVQGA (300 aa). The interval 7–1043 is domain 1 (proline-activating); sequence IQDIYPLSYM…ALIIREAEQN (1037 aa). The interval 490 to 889 is adenylation 1; the sequence is TYRELNKAAN…NHPDISEAAI (400 aa). Residues 966–1041 form the Carrier 1 domain; it reads APRNLLEAKL…GLALIIREAE (76 aa). Serine 1001 is subject to O-(pantetheine 4'-phosphoryl)serine. Positions 1053 to 1334 are condensation 2; that stretch reads KRDTYPVSSA…NTLALRTRPA (282 aa). Residues 1053 to 2069 form a domain 2 (glutamine-activating) region; it reads KRDTYPVSSA…TVEGLATVIR (1017 aa). An adenylation 2 region spans residues 1521–1924; that stretch reads TYKELNEQAN…SIEGVREAAV (404 aa). Residues 1997 to 2072 enclose the Carrier 2 domain; the sequence is APRNVTEMKL…GLATVIREGT (76 aa). An O-(pantetheine 4'-phosphoryl)serine modification is found at serine 2032. Residues 2084–2374 form a condensation 3 region; the sequence is KQETYPVSSA…NTLALRTRPE (291 aa). The segment at 2084 to 3596 is domain 3 (proline-activating); sequence KQETYPVSSA…ELTEDALQEI (1513 aa). The interval 2560 to 2956 is adenylation 3; sequence TYQELDEWSN…CIKGVKDAAV (397 aa). Residues 3034-3108 enclose the Carrier 3 domain; the sequence is PPSSKMEQIL…ELAAYIRDSD (75 aa). An O-(pantetheine 4'-phosphoryl)serine modification is found at serine 3069. An epimerization region spans residues 3116–3596; sequence VEGDVQWSPV…ELTEDALQEI (481 aa).

The protein belongs to the ATP-dependent AMP-binding enzyme family. Requires pantetheine 4'-phosphate as cofactor.

In terms of biological role, this protein is a multifunctional enzyme, able to activate and polymerize the amino acids Pro, Gln and Tyr as part of the biosynthesis of the lipopeptide antibiotic plipastatin. The Tyr residue is further epimerized to the D-isomer form. The activation sites for these amino acids consist of individual domains. This chain is Plipastatin synthase subunit D (ppsD), found in Bacillus subtilis (strain 168).